Reading from the N-terminus, the 525-residue chain is tRNA-2-methylthio-N(6)-dimethylallyladenosine synthase (525 aa).

The 117-residue stretch at Arg14–His130 folds into the MTTase N-terminal domain. Cys23, Cys59, Cys93, Cys167, Cys171, and Cys174 together coordinate [4Fe-4S] cluster. Residues Arg153–Glu400 form the Radical SAM core domain. A TRAM domain is found at Gln403 to Leu482.

It belongs to the methylthiotransferase family. MiaB subfamily. In terms of assembly, monomer. [4Fe-4S] cluster serves as cofactor.

The protein localises to the cytoplasm. The enzyme catalyses N(6)-dimethylallyladenosine(37) in tRNA + (sulfur carrier)-SH + AH2 + 2 S-adenosyl-L-methionine = 2-methylsulfanyl-N(6)-dimethylallyladenosine(37) in tRNA + (sulfur carrier)-H + 5'-deoxyadenosine + L-methionine + A + S-adenosyl-L-homocysteine + 2 H(+). Its function is as follows. Catalyzes the methylthiolation of N6-(dimethylallyl)adenosine (i(6)A), leading to the formation of 2-methylthio-N6-(dimethylallyl)adenosine (ms(2)i(6)A) at position 37 in tRNAs that read codons beginning with uridine. The protein is tRNA-2-methylthio-N(6)-dimethylallyladenosine synthase of Mycobacterium sp. (strain MCS).